A 1020-amino-acid polypeptide reads, in one-letter code: Sodium/potassium-transporting ATPase subunit alpha-2 (1020 aa).

Positions 1–5 (MGRGA) are excised as a propeptide. The segment at 1-31 (MGRGAGREYSPAATTAENGGGKKKQKEKELD) is disordered. Residues 6–85 (GREYSPAATT…NALTPPPTTP (80 aa)) lie on the Cytoplasmic side of the membrane. Serine 10 carries the phosphoserine modification. Positions 80–82 (PPP) are interaction with phosphoinositide-3 kinase. Residues 86-106 (EWVKFCRQLFGGFSILLWIGA) traverse the membrane as a helical segment. The Extracellular segment spans residues 107–129 (ILCFLAYGIQAAMEDEPSNDNLY). A helical transmembrane segment spans residues 130–150 (LGVVLAAVVIVTGCFSYYQEA). Residues 151-286 (KSSKIMDSFK…VGRTPIAMEI (136 aa)) are Cytoplasmic-facing. Over residues 212-227 (DNSSLTGESEPQTRSP) the composition is skewed to polar residues. Residues 212-231 (DNSSLTGESEPQTRSPEFTH) form a disordered region. A helical transmembrane segment spans residues 287–306 (EHFIQLITGVAVFPGVSFFV). Residues 307–318 (LSLILGYSWLEA) are Extracellular-facing. Residues 319-336 (VIFLIGIIVANVPEGLLA) form a helical membrane-spanning segment. The Cytoplasmic portion of the chain corresponds to 337–769 (TVTVCLTLTA…EEGRLVFDNL (433 aa)). Aspartate 374 acts as the 4-aspartylphosphate intermediate in catalysis. Serine 439, serine 450, serine 496, and serine 559 each carry phosphoserine. Threonine 570 carries the phosphothreonine modification. 2 positions are modified to phosphoserine: serine 587 and serine 672. Mg(2+)-binding residues include aspartate 714 and aspartate 718. A helical transmembrane segment spans residues 770–789 (KKSIAYTLTSNIPEITPFLL). Residues 790 to 799 (FIIANIPLPL) are Extracellular-facing. Residues 800–820 (GTVTILCIDLGTDMVPAISLA) form a helical membrane-spanning segment. Residues 821-840 (YEAAESDIMKRQPRNSQTDK) are Cytoplasmic-facing. Residue serine 826 is modified to Phosphoserine. A helical transmembrane segment spans residues 841-863 (LVNERLISMAYGQIGMIQALGGF). Residues 864 to 915 (FTYFVILAENGFLPSRLLGIRLDWDDRTMNDLEDSYGQEWTYEQRKVVEFTC) are Extracellular-facing. The chain crosses the membrane as a helical span at residues 916-935 (HTAFFASIVVVQWADLIICK). At 936–948 (TRRNSVFQQGMKN) the chain is on the cytoplasmic side. A Phosphoserine; by PKA modification is found at serine 940. Residues 949 to 967 (KILIFGLLEETALAAFLSY) form a helical membrane-spanning segment. Over 968-982 (CPGMGVALRMYPLKV) the chain is Extracellular. The chain crosses the membrane as a helical span at residues 983–1003 (TWWFCAFPYSLLIFIYDEVRK). At 1004 to 1020 (LILRRYPGGWVEKETYY) the chain is on the cytoplasmic side.

Belongs to the cation transport ATPase (P-type) (TC 3.A.3) family. Type IIC subfamily. As to quaternary structure, the sodium/potassium-transporting ATPase is composed of a catalytic alpha subunit, an auxiliary non-catalytic beta subunit and an additional regulatory subunit. Interacts with regulatory subunit FXYD1.

It is found in the membrane. The protein localises to the cell membrane. It carries out the reaction K(+)(out) + Na(+)(in) + ATP + H2O = K(+)(in) + Na(+)(out) + ADP + phosphate + H(+). Functionally, this is the catalytic component of the active enzyme, which catalyzes the hydrolysis of ATP coupled with the exchange of sodium and potassium ions across the plasma membrane. This action creates the electrochemical gradient of sodium and potassium, providing the energy for active transport of various nutrients. This Pongo abelii (Sumatran orangutan) protein is Sodium/potassium-transporting ATPase subunit alpha-2 (ATP1A2).